The following is a 497-amino-acid chain: Transmembrane protein 200A (497 aa).

The Cytoplasmic portion of the chain corresponds to 1 to 61 (MIATGGVITG…RGKIRLYSAS (61 aa)). Over residues 20–30 (TRSQYHLSAQS) the composition is skewed to polar residues. The interval 20–44 (TRSQYHLSAQSPGPAPEKKTTKRKP) is disordered. Residues 62–82 (GFFLVLGVLILMAGIAMAVLG) form a helical membrane-spanning segment. Residues 83–127 (YWPHKDQPKAPETKMSANNTQSFGREQAGSIAQFLEQHMHSEKMK) lie on the Extracellular side of the membrane. Residue asparagine 100 is glycosylated (N-linked (GlcNAc...) asparagine). The helical transmembrane segment at 128-148 (MLGPFTMGIGIFIFICANAIL) threads the bilayer. Residues 149 to 497 (HENRDRETKV…LKRGTSETRF (349 aa)) are Cytoplasmic-facing. Residues 353–375 (SNSATESASSTSSRSSLSPGSTS) show a composition bias toward low complexity. Disordered regions lie at residues 353 to 385 (SNSATESASSTSSRSSLSPGSTSGRFLSPGAAR) and 400 to 438 (HSKSLDLERGPTKLTVQPEQRKHPSWPRLDRSNSKGYTR). Over residues 427-438 (RLDRSNSKGYTR) the composition is skewed to basic and acidic residues.

The protein belongs to the TMEM200 family.

Its subcellular location is the membrane. The polypeptide is Transmembrane protein 200A (tmem200a) (Danio rerio (Zebrafish)).